Here is a 504-residue protein sequence, read N- to C-terminus: Protein FMP42 (504 aa).

Residues 1-11 (MTSTRTLRYAQ) lie on the Vacuolar side of the membrane. The chain crosses the membrane as a helical span at residues 12 to 32 (VACACIWCLFSAGIIFGFAAL). At 33–64 (KPILISEGVYHELCDPKDGDRLLCTAQDLKLN) the chain is on the cytoplasmic side. A helical transmembrane segment spans residues 65 to 85 (FIFALSATVTNIMALPVGKIL). The Vacuolar portion of the chain corresponds to 86–91 (DMYGPR). Residues 92 to 112 (VCGIIGSCLLFLASGNFISAK) form a helical membrane-spanning segment. The Cytoplasmic portion of the chain corresponds to 113–119 (HLVSLWD). Residues 120 to 140 (PYLVGYTLLAVAGPFVFISCF) traverse the membrane as a helical segment. The Vacuolar segment spans residues 141-150 (QLANSFPQRS). The chain crosses the membrane as a helical span at residues 151–171 (GTVLALLTGSFDSSSALFLLY). Residues 172 to 186 (RLLYQNWFPTLNVSR) lie on the Cytoplasmic side of the membrane. A helical transmembrane segment spans residues 187 to 207 (FFTLYLIVPVFILACQLTIMP). At 208–302 (HSSYKTVNHI…KSAYEQIKSP (95 aa)) the chain is on the vacuolar side. Residues Ser238, Ser249, and Ser269 each carry the phosphoserine modification. A helical membrane pass occupies residues 303–323 (WFYLMLLFALVAMLRINYFIA). At 324-344 (TVRTQEEYLLNDPDLALKLNS) the chain is on the cytoplasmic side. A helical transmembrane segment spans residues 345-365 (IFDMLLPLGGAVSIPFIGLLL). Residues 366–385 (DHTDTLSTLTILFTTSTAIG) are Vacuolar-facing. Residues 386-406 (VFGLIPNSFTWNLIGIVLLVV) traverse the membrane as a helical segment. Residues 407 to 421 (YRPFYYTVVSDYSSK) lie on the Cytoplasmic side of the membrane. The helical transmembrane segment at 422–442 (VFGFDTFGTVYGLLSCICGIF) threads the bilayer. Residues 443-462 (NMSQNLLDKWTHTTFNMNPF) are Vacuolar-facing. The chain crosses the membrane as a helical span at residues 463–483 (PINLTLVILTVVFSLTLTFYI). Over 484–504 (RSQILPKPVNERGLSSNYQTI) the chain is Cytoplasmic.

This sequence belongs to the SLC43A transporter (TC 2.A.1.44) family.

It is found in the vacuole membrane. This chain is Protein FMP42 (FMP42), found in Saccharomyces cerevisiae (strain ATCC 204508 / S288c) (Baker's yeast).